We begin with the raw amino-acid sequence, 431 residues long: Adenylosuccinate synthetase (431 aa).

Residues 13-19 and 41-43 contribute to the GTP site; these read GDEGKGK and GHT. Residue aspartate 14 is the Proton acceptor of the active site. Mg(2+)-binding residues include aspartate 14 and glycine 41. Residues 14–17, 39–42, threonine 130, arginine 144, glutamine 225, threonine 240, and arginine 304 each bind IMP; these read DEGK and NAGH. Residue histidine 42 is the Proton donor of the active site. Position 300–306 (300–306) interacts with substrate; sequence ATTGRAR. GTP contacts are provided by residues arginine 306, 332 to 334, and 414 to 416; these read KLD and STG.

It belongs to the adenylosuccinate synthetase family. In terms of assembly, homodimer. It depends on Mg(2+) as a cofactor.

The protein resides in the cytoplasm. It carries out the reaction IMP + L-aspartate + GTP = N(6)-(1,2-dicarboxyethyl)-AMP + GDP + phosphate + 2 H(+). Its pathway is purine metabolism; AMP biosynthesis via de novo pathway; AMP from IMP: step 1/2. Its function is as follows. Plays an important role in the de novo pathway of purine nucleotide biosynthesis. Catalyzes the first committed step in the biosynthesis of AMP from IMP. The chain is Adenylosuccinate synthetase from Chromohalobacter salexigens (strain ATCC BAA-138 / DSM 3043 / CIP 106854 / NCIMB 13768 / 1H11).